A 96-amino-acid polypeptide reads, in one-letter code: Co-chaperonin GroES (96 aa).

The protein belongs to the GroES chaperonin family. Heptamer of 7 subunits arranged in a ring. Interacts with the chaperonin GroEL.

It is found in the cytoplasm. Functionally, together with the chaperonin GroEL, plays an essential role in assisting protein folding. The GroEL-GroES system forms a nano-cage that allows encapsulation of the non-native substrate proteins and provides a physical environment optimized to promote and accelerate protein folding. GroES binds to the apical surface of the GroEL ring, thereby capping the opening of the GroEL channel. This Idiomarina loihiensis (strain ATCC BAA-735 / DSM 15497 / L2-TR) protein is Co-chaperonin GroES.